The sequence spans 121 residues: Large ribosomal subunit protein bL12 (121 aa).

Belongs to the bacterial ribosomal protein bL12 family. As to quaternary structure, homodimer. Part of the ribosomal stalk of the 50S ribosomal subunit. Forms a multimeric L10(L12)X complex, where L10 forms an elongated spine to which 2 to 4 L12 dimers bind in a sequential fashion. Binds GTP-bound translation factors.

Functionally, forms part of the ribosomal stalk which helps the ribosome interact with GTP-bound translation factors. Is thus essential for accurate translation. This chain is Large ribosomal subunit protein bL12, found in Anoxybacillus flavithermus (strain DSM 21510 / WK1).